The chain runs to 577 residues: Vacuolar membrane amino acid uptake transporter fnx2 (577 aa).

Residues 1 to 14 (MSNPRTKSPNTNRG) show a composition bias toward polar residues. The disordered stretch occupies residues 1 to 80 (MSNPRTKSPN…SPHRQDAATT (80 aa)). Residues 22 to 39 (SALLNDSLSSLNGNSSYD) are compositionally biased toward low complexity. Positions 40 to 62 (SIKDSSKNNKDVAEVNEYPRRPE) are enriched in basic and acidic residues. 14 consecutive transmembrane segments (helical) span residues 91 to 111 (VLPA…IVAS), 123 to 145 (FSQV…PLFG), 157 to 177 (LLAA…SRSL), 186 to 206 (IAGI…SDIV), 217 to 237 (IINV…GYFA), 244 to 264 (IGFL…YFTL), 286 to 306 (LILL…GGNV), 317 to 337 (LLIA…FVAF), 356 to 376 (LCNF…PLFF), 391 to 411 (LIPM…VISL), 418 to 438 (ITVG…RYGY), 448 to 468 (YPFS…VAII), 490 to 510 (GCVL…GIKL), and 547 to 567 (LLGS…CAFV).

This sequence belongs to the major facilitator superfamily.

Its subcellular location is the vacuole. It is found in the membrane. Its function is as follows. MFS-type transporter involved in vacuolar amino acid uptake. This chain is Vacuolar membrane amino acid uptake transporter fnx2 (fnx2), found in Schizosaccharomyces pombe (strain 972 / ATCC 24843) (Fission yeast).